The chain runs to 176 residues: MDLPGPIHDFLLVFLGLGLILGGIGVVLLTNPIYSAFSLGLVLVCISLLYILSNSYFVAAAQLLIYVGAINVLIIFAVMFMNGSEYYKDFNLWTVGNGFTLLICTSIFGLLITTITDTSWYGIIWTTRSNQIIEHDLISNSQQIGIHLSTDFFLPFEFISIILLAALIGAITVARQ.

The next 5 membrane-spanning stretches (helical) occupy residues F10–T30, P32–L52, A61–M81, L92–I112, and F152–T172.

The protein belongs to the complex I subunit 6 family. NDH is composed of at least 16 different subunits, 5 of which are encoded in the nucleus.

The protein resides in the plastid. It localises to the chloroplast thylakoid membrane. The enzyme catalyses a plastoquinone + NADH + (n+1) H(+)(in) = a plastoquinol + NAD(+) + n H(+)(out). The catalysed reaction is a plastoquinone + NADPH + (n+1) H(+)(in) = a plastoquinol + NADP(+) + n H(+)(out). Functionally, NDH shuttles electrons from NAD(P)H:plastoquinone, via FMN and iron-sulfur (Fe-S) centers, to quinones in the photosynthetic chain and possibly in a chloroplast respiratory chain. The immediate electron acceptor for the enzyme in this species is believed to be plastoquinone. Couples the redox reaction to proton translocation, and thus conserves the redox energy in a proton gradient. This is NAD(P)H-quinone oxidoreductase subunit 6, chloroplastic (ndhG) from Morus indica (Mulberry).